Here is a 395-residue protein sequence, read N- to C-terminus: Capsid protein (395 aa).

Residues methionine 1–isoleucine 41 show a composition bias toward basic residues. A disordered region spans residues methionine 1–methionine 51. Residues alanine 2–serine 9 carry the Nuclear localization signal motif.

The protein localises to the host nucleus. It is found in the virion. Its function is as follows. Self-assembles to form the virion icosahedral capsid. The protein is Capsid protein of Chaetoceros setoense (Chaetoceros setoense DNA virus).